The sequence spans 320 residues: 4-hydroxyproline 2-epimerase (320 aa).

Cysteine 98 functions as the Proton acceptor in the catalytic mechanism. Substrate is bound by residues glycine 99 to histidine 100, histidine 218, and aspartate 242. Catalysis depends on cysteine 246, which acts as the Proton donor. Substrate is bound at residue glycine 247–threonine 248.

Belongs to the proline racemase family.

It carries out the reaction trans-4-hydroxy-L-proline = cis-4-hydroxy-D-proline. Catalyzes the epimerization of trans-4-hydroxy-L-proline (t4LHyp) to cis-4-hydroxy-D-proline (c4DHyp). Is likely involved in a degradation pathway that converts t4LHyp to alpha-ketoglutarate. Displays no proline racemase activity. The chain is 4-hydroxyproline 2-epimerase from Burkholderia pseudomallei (strain 1710b).